Reading from the N-terminus, the 338-residue chain is Large ribosomal subunit protein uL3 (338 aa).

The segment covering 228–237 (HKHRKGHRRT) has biased composition (basic residues). Residues 228–255 (HKHRKGHRRTGTIGPQAPALMFTQPRPG) form a disordered region.

Belongs to the universal ribosomal protein uL3 family. In terms of assembly, part of the 50S ribosomal subunit. Forms a cluster with proteins L14 and L24e.

In terms of biological role, one of the primary rRNA binding proteins, it binds directly near the 3'-end of the 23S rRNA, where it nucleates assembly of the 50S subunit. The sequence is that of Large ribosomal subunit protein uL3 from Pyrobaculum calidifontis (strain DSM 21063 / JCM 11548 / VA1).